The chain runs to 77 residues: Liver-expressed antimicrobial peptide 2 (77 aa).

Residues 1-22 (MWHLKLCAVLMIFLLLLGQIDG) form the signal peptide. The propeptide occupies 23-37 (SPIPEVSSAKRRPRR). Cystine bridges form between C54/C65 and C60/C70.

The protein belongs to the LEAP2 family.

Its subcellular location is the secreted. Functionally, has an antimicrobial activity. The polypeptide is Liver-expressed antimicrobial peptide 2 (LEAP2) (Homo sapiens (Human)).